The sequence spans 359 residues: Peptide chain release factor 1 (359 aa).

Glutamine 235 is modified (N5-methylglutamine).

Belongs to the prokaryotic/mitochondrial release factor family. Post-translationally, methylated by PrmC. Methylation increases the termination efficiency of RF1.

It is found in the cytoplasm. Peptide chain release factor 1 directs the termination of translation in response to the peptide chain termination codons UAG and UAA. This is Peptide chain release factor 1 from Methylibium petroleiphilum (strain ATCC BAA-1232 / LMG 22953 / PM1).